A 192-amino-acid chain; its full sequence is Small ribosomal subunit protein bS16 (192 aa).

The disordered stretch occupies residues 153-192; that stretch reads AEAKAKAEAEAAAAAEEAAETEETPVEAAAEEAPAAESAE. Residues 178 to 192 are compositionally biased toward low complexity; sequence VEAAAEEAPAAESAE.

This sequence belongs to the bacterial ribosomal protein bS16 family.

This chain is Small ribosomal subunit protein bS16, found in Porphyromonas gingivalis (strain ATCC BAA-308 / W83).